A 157-amino-acid polypeptide reads, in one-letter code: Endoribonuclease YbeY (157 aa).

Positions 116, 120, and 126 each coordinate Zn(2+).

Belongs to the endoribonuclease YbeY family. Requires Zn(2+) as cofactor.

It is found in the cytoplasm. Single strand-specific metallo-endoribonuclease involved in late-stage 70S ribosome quality control and in maturation of the 3' terminus of the 16S rRNA. In Paenarthrobacter aurescens (strain TC1), this protein is Endoribonuclease YbeY.